A 68-amino-acid polypeptide reads, in one-letter code: Large ribosomal subunit protein uL29 (68 aa).

Belongs to the universal ribosomal protein uL29 family.

The polypeptide is Large ribosomal subunit protein uL29 (Wigglesworthia glossinidia brevipalpis).